Reading from the N-terminus, the 216-residue chain is uncharacterized protein (216 aa).

It localises to the plastid. Its subcellular location is the chloroplast. This is an uncharacterized protein from Pyropia yezoensis (Susabi-nori).